The sequence spans 393 residues: MSGDFDTIRDASSSDEVQLVRLLEEKIKSLQIEIENLRKELNYYKAEMEKMLSPPLIEAVVLDVLPDGRVLVRSSSGPNLVVNVASHIDQKLIKPGVSVALNQRGSTILEVLPQKEDPIVKTMEIVEKPNVTYSEIGGLEEQIKELREVVELPLKKPEIFREIGVEPPKGVLLYGPPGTGKTMLAKAVATESNAVFIHVVASEFAQKFVGEGARIVRELFEMAKRKAPSIIFIDEIDAIGAKRIDIGTSGEREIQRTLMQLLAELDGFNPLDNVKIIAATNRIDILDPALLRPGRFDRIIEVPLPDFRGRTEIFNIYLKKMKVEDNINLELLSQLSEGFSGADIKNVCVEAAYMAIRDGRNKVTMKDLVNAITKINVKRNNMESMKERREKYS.

The stretch at 14-53 forms a coiled coil; the sequence is SDEVQLVRLLEEKIKSLQIEIENLRKELNYYKAEMEKMLS. ATP contacts are provided by residues 178 to 183 and Y317; that span reads GTGKTM. The docks into pockets in the proteasome alpha-ring to cause gate opening stretch occupies residues 391–393; sequence KYS.

The protein belongs to the AAA ATPase family. In terms of assembly, homohexamer. The hexameric complex has a two-ring architecture resembling a top hat that caps the 20S proteasome core at one or both ends. Upon ATP-binding, the C-terminus of PAN interacts with the alpha-rings of the proteasome core by binding to the intersubunit pockets.

The protein resides in the cytoplasm. Its function is as follows. ATPase which is responsible for recognizing, binding, unfolding and translocation of substrate proteins into the archaeal 20S proteasome core particle. Is essential for opening the gate of the 20S proteasome via an interaction with its C-terminus, thereby allowing substrate entry and access to the site of proteolysis. Thus, the C-termini of the proteasomal ATPase function like a 'key in a lock' to induce gate opening and therefore regulate proteolysis. Unfolding activity requires energy from ATP hydrolysis, whereas ATP binding alone promotes ATPase-20S proteasome association which triggers gate opening, and supports translocation of unfolded substrates. The protein is Proteasome-activating nucleotidase of Saccharolobus islandicus (strain Y.N.15.51 / Yellowstone #2) (Sulfolobus islandicus).